Consider the following 599-residue polypeptide: Elongation factor 4 (599 aa).

One can recognise a tr-type G domain in the interval 2-184 (KNIRNFSIIA…EIVAKIPAPK (183 aa)). Residues 14-19 (DHGKST) and 131-134 (NKID) each bind GTP.

The protein belongs to the TRAFAC class translation factor GTPase superfamily. Classic translation factor GTPase family. LepA subfamily.

Its subcellular location is the cell inner membrane. It catalyses the reaction GTP + H2O = GDP + phosphate + H(+). Required for accurate and efficient protein synthesis under certain stress conditions. May act as a fidelity factor of the translation reaction, by catalyzing a one-codon backward translocation of tRNAs on improperly translocated ribosomes. Back-translocation proceeds from a post-translocation (POST) complex to a pre-translocation (PRE) complex, thus giving elongation factor G a second chance to translocate the tRNAs correctly. Binds to ribosomes in a GTP-dependent manner. This chain is Elongation factor 4, found in Mannheimia succiniciproducens (strain KCTC 0769BP / MBEL55E).